The following is a 465-amino-acid chain: ATP synthase subunit beta (465 aa).

Gly152–Thr159 contributes to the ATP binding site.

It belongs to the ATPase alpha/beta chains family. In terms of assembly, F-type ATPases have 2 components, CF(1) - the catalytic core - and CF(0) - the membrane proton channel. CF(1) has five subunits: alpha(3), beta(3), gamma(1), delta(1), epsilon(1). CF(0) has three main subunits: a(1), b(2) and c(9-12). The alpha and beta chains form an alternating ring which encloses part of the gamma chain. CF(1) is attached to CF(0) by a central stalk formed by the gamma and epsilon chains, while a peripheral stalk is formed by the delta and b chains.

It localises to the cell inner membrane. It carries out the reaction ATP + H2O + 4 H(+)(in) = ADP + phosphate + 5 H(+)(out). Produces ATP from ADP in the presence of a proton gradient across the membrane. The catalytic sites are hosted primarily by the beta subunits. In Campylobacter concisus (strain 13826), this protein is ATP synthase subunit beta.